Consider the following 648-residue polypeptide: MDLDNIEGLNEVRLAVYRAALKLRSLQKLCQMNLVLLQDLRPILNTLWSSGESTISLAQEDVQQHLEELFRSISPELPDQAVTEATDQTTRLLFKLFDRGQTGVILLRSVEAALIALCGDTLSAKQRALFRLAESYSGNQESDRGSISRSALRVLLEDLSQVPAVVQENHVFGHAETAVSSCFNGVISAGVTEEHFIWWLQSEPRLLLWLSTLYRISVSEAVQHRVHCHACKAFPITGLRYRCLKCLNVHLCQSCFLTERRSRKHKPSHSVLEYCTQPSWKESMASLASSARHALVPRHTRREAERKRALRAGSSAELRYSASNPALQFAAYADTHDAAAEASQTAAPAAVTVESKSLQTEEIQIPQRETAELQKDISVTQKAMRDLQRDKWLLEKEFQVWRVAAQSEHDSLEDKCSELKSMMETLNQHNQHLEEELDTVRHLLSLRHKEELKTSHSNLQLEQDGSINENNWTQPGLLKPHESSSTEHEVEERGTRQERRFEEEEDTLYDLSEDISTNLDDSESILPQDVHTALAQREEEELQEEEEGLHEKEEGLPTEEEELQHDRQDPSFFHGCMSDFAPDGHSDDSEMDDEEDLCELVQRLRNELSLYTASGSVCLQKEMLMTAAEGVRDSVSHLVTSVKSSSLA.

The segment at 223–279 (QHRVHCHACKAFPITGLRYRCLKCLNVHLCQSCFLTERRSRKHKPSHSVLEYCTQPS) adopts a ZZ-type zinc-finger fold. 8 residues coordinate Zn(2+): Cys-228, Cys-231, Cys-243, Cys-246, Cys-252, Cys-255, His-265, and His-269. Residues 367–446 (QRETAELQKD…LDTVRHLLSL (80 aa)) adopt a coiled-coil conformation. A compositionally biased stretch (polar residues) spans 455–474 (SHSNLQLEQDGSINENNWTQ). 2 disordered regions span residues 455 to 509 (SHSN…DTLY) and 536 to 557 (QREE…EGLP). Over residues 479–502 (KPHESSSTEHEVEERGTRQERRFE) the composition is skewed to basic and acidic residues. The span at 538 to 548 (EEEELQEEEEG) shows a compositional bias: acidic residues.

The protein resides in the cell membrane. The chain is Dystrotelin (dytn) from Danio rerio (Zebrafish).